The following is a 254-amino-acid chain: Persulfide dioxygenase ETHE1, mitochondrial (254 aa).

The transit peptide at 1–7 (MAGSVLK) directs the protein to the mitochondrion. Phosphoserine is present on residues Ser-14 and Ser-19. Residue Lys-32 is modified to N6-acetyllysine; alternate. The residue at position 32 (Lys-32) is an N6-succinyllysine; alternate. The residue at position 66 (Lys-66) is an N6-acetyllysine. 3 residues coordinate Fe cation: His-79, His-135, and Asp-154.

This sequence belongs to the metallo-beta-lactamase superfamily. Glyoxalase II family. Homodimer. Monomer. Interacts with TST. May interact with RELA. The cofactor is Fe(2+).

The protein localises to the cytoplasm. Its subcellular location is the nucleus. It localises to the mitochondrion matrix. The catalysed reaction is S-sulfanylglutathione + O2 + H2O = sulfite + glutathione + 2 H(+). With respect to regulation, glutathione increases enzyme activity. Its function is as follows. Sulfur dioxygenase that plays an essential role in hydrogen sulfide catabolism in the mitochondrial matrix. Hydrogen sulfide (H(2)S) is first oxidized by SQRDL, giving rise to cysteine persulfide residues. ETHE1 consumes molecular oxygen to catalyze the oxidation of the persulfide, once it has been transferred to a thiophilic acceptor, such as glutathione (R-SSH). Plays an important role in metabolic homeostasis in mitochondria by metabolizing hydrogen sulfide and preventing the accumulation of supraphysiological H(2)S levels that have toxic effects, due to the inhibition of cytochrome c oxidase. First described as a protein that can shuttle between the nucleus and the cytoplasm and suppress p53-induced apoptosis by sequestering the transcription factor RELA/NFKB3 in the cytoplasm and preventing its accumulation in the nucleus. In Bos taurus (Bovine), this protein is Persulfide dioxygenase ETHE1, mitochondrial (ETHE1).